We begin with the raw amino-acid sequence, 237 residues long: Sugar fermentation stimulation protein homolog (237 aa).

This sequence belongs to the SfsA family.

The chain is Sugar fermentation stimulation protein homolog from Pseudomonas putida (strain ATCC 47054 / DSM 6125 / CFBP 8728 / NCIMB 11950 / KT2440).